The chain runs to 211 residues: Urease accessory protein UreG (211 aa).

11–18 (GPVGAGKT) is a binding site for GTP.

The protein belongs to the SIMIBI class G3E GTPase family. UreG subfamily. Homodimer. UreD, UreF and UreG form a complex that acts as a GTP-hydrolysis-dependent molecular chaperone, activating the urease apoprotein by helping to assemble the nickel containing metallocenter of UreC. The UreE protein probably delivers the nickel.

The protein localises to the cytoplasm. Functionally, facilitates the functional incorporation of the urease nickel metallocenter. This process requires GTP hydrolysis, probably effectuated by UreG. The chain is Urease accessory protein UreG from Actinobacillus pleuropneumoniae (Haemophilus pleuropneumoniae).